The chain runs to 272 residues: Undecaprenyl-diphosphatase (272 aa).

A run of 7 helical transmembrane segments spans residues 39–59 (SGLT…FVYF), 87–107 (WMIV…EQPI), 113–133 (SSPL…GLTD), 145–165 (ITLG…VPGV), 188–208 (FSFL…GLHL), 220–240 (PMLV…AFLL), and 251–271 (FVWY…VGLL).

Belongs to the UppP family.

The protein resides in the cell inner membrane. It carries out the reaction di-trans,octa-cis-undecaprenyl diphosphate + H2O = di-trans,octa-cis-undecaprenyl phosphate + phosphate + H(+). In terms of biological role, catalyzes the dephosphorylation of undecaprenyl diphosphate (UPP). Confers resistance to bacitracin. The chain is Undecaprenyl-diphosphatase from Trichlorobacter lovleyi (strain ATCC BAA-1151 / DSM 17278 / SZ) (Geobacter lovleyi).